Reading from the N-terminus, the 375-residue chain is ORC1-type DNA replication protein 3 (375 aa).

ATP is bound by residues 66–70 (TGKTT), tyrosine 209, and arginine 221.

Belongs to the CDC6/cdc18 family.

Functionally, involved in regulation of DNA replication. The polypeptide is ORC1-type DNA replication protein 3 (cdc6c) (Haloarcula marismortui (strain ATCC 43049 / DSM 3752 / JCM 8966 / VKM B-1809) (Halobacterium marismortui)).